The primary structure comprises 538 residues: Exo-alpha-bergamotene synthase (538 aa).

Mg(2+) contacts are provided by aspartate 291, aspartate 295, aspartate 435, threonine 439, and glutamate 443. Positions 291-295 match the DDXXD motif motif; that stretch reads DDIYD.

The protein belongs to the terpene synthase family. It depends on Mg(2+) as a cofactor. Requires Mn(2+) as cofactor.

The enzyme catalyses (2E,6E)-farnesyl diphosphate = (1S,5S,6R)-alpha-bergamotene + diphosphate. Functionally, catalyzes a mixture of sesquiterpenoids from (2E,6E)-farnesyl diphosphate. Catalyzes the formation of exo-alpha-bergamotene, as well as (E)-nerolidol, (Z)-alpha-bisabolene, (E)-beta-farnesene and beta-sesquiphellandrene. Also has activity towards geranyl diphosphate, but to a much lesser extent. In Lavandula angustifolia (Lavender), this protein is Exo-alpha-bergamotene synthase.